A 362-amino-acid chain; its full sequence is Adenosine deaminase (362 aa).

Residues His-19 and His-21 each contribute to the Zn(2+) site. Residues His-21, Asp-23, and Gly-181 each coordinate substrate. Residue His-208 participates in Zn(2+) binding. The active-site Proton donor is Glu-211. Residue Asp-300 participates in Zn(2+) binding.

It belongs to the metallo-dependent hydrolases superfamily. Adenosine and AMP deaminases family. Adenosine deaminase subfamily. Zn(2+) serves as cofactor.

It carries out the reaction adenosine + H2O + H(+) = inosine + NH4(+). It catalyses the reaction 2'-deoxyadenosine + H2O + H(+) = 2'-deoxyinosine + NH4(+). Functionally, catalyzes the hydrolytic deamination of adenosine and 2-deoxyadenosine. This is Adenosine deaminase from Mycobacterium sp. (strain JLS).